A 137-amino-acid chain; its full sequence is Large ribosomal subunit protein uL16 (137 aa).

Belongs to the universal ribosomal protein uL16 family. Part of the 50S ribosomal subunit.

Its function is as follows. Binds 23S rRNA and is also seen to make contacts with the A and possibly P site tRNAs. This is Large ribosomal subunit protein uL16 from Pseudomonas putida (strain ATCC 47054 / DSM 6125 / CFBP 8728 / NCIMB 11950 / KT2440).